Here is a 436-residue protein sequence, read N- to C-terminus: ATP-dependent protease ATPase subunit HslU (436 aa).

Residues I19, 61–66, D249, E314, and R386 each bind ATP; that span reads GVGKTE.

It belongs to the ClpX chaperone family. HslU subfamily. In terms of assembly, a double ring-shaped homohexamer of HslV is capped on each side by a ring-shaped HslU homohexamer. The assembly of the HslU/HslV complex is dependent on binding of ATP.

It is found in the cytoplasm. ATPase subunit of a proteasome-like degradation complex; this subunit has chaperone activity. The binding of ATP and its subsequent hydrolysis by HslU are essential for unfolding of protein substrates subsequently hydrolyzed by HslV. HslU recognizes the N-terminal part of its protein substrates and unfolds these before they are guided to HslV for hydrolysis. In Bartonella bacilliformis (strain ATCC 35685 / KC583 / Herrer 020/F12,63), this protein is ATP-dependent protease ATPase subunit HslU.